We begin with the raw amino-acid sequence, 314 residues long: Replication initiation protein (314 aa).

Belongs to the plasmid replication initiation factor family.

In terms of biological role, this protein is probably a specific topoisomerase involved in initiating replication. This protein is specifically required and may be rate-limiting for replication of the plasmid in vivo. In Staphylococcus aureus, this protein is Replication initiation protein (repC).